Consider the following 567-residue polypeptide: Proline--tRNA ligase (567 aa).

This sequence belongs to the class-II aminoacyl-tRNA synthetase family. ProS type 1 subfamily. In terms of assembly, homodimer.

Its subcellular location is the cytoplasm. It catalyses the reaction tRNA(Pro) + L-proline + ATP = L-prolyl-tRNA(Pro) + AMP + diphosphate. Catalyzes the attachment of proline to tRNA(Pro) in a two-step reaction: proline is first activated by ATP to form Pro-AMP and then transferred to the acceptor end of tRNA(Pro). As ProRS can inadvertently accommodate and process non-cognate amino acids such as alanine and cysteine, to avoid such errors it has two additional distinct editing activities against alanine. One activity is designated as 'pretransfer' editing and involves the tRNA(Pro)-independent hydrolysis of activated Ala-AMP. The other activity is designated 'posttransfer' editing and involves deacylation of mischarged Ala-tRNA(Pro). The misacylated Cys-tRNA(Pro) is not edited by ProRS. This is Proline--tRNA ligase from Stenotrophomonas maltophilia (strain R551-3).